Consider the following 358-residue polypeptide: uncharacterized protein (358 aa).

The protein belongs to the SMP-30/CGR1 family.

This is an uncharacterized protein from Saccharomyces cerevisiae (strain ATCC 204508 / S288c) (Baker's yeast).